Here is a 188-residue protein sequence, read N- to C-terminus: Protein Cripto (188 aa).

The first 30 residues, 1 to 30 (MDCRKMARFSYSVIWIMAISKVFELGLVAG), serve as a signal peptide directing secretion. The EGF-like domain occupies 78-107 (LNRTCCLNGGTCMLGSFCACPPSFYGRNCE). N-linked (GlcNAc...) asparagine glycosylation is present at Asn79. Intrachain disulfides connect Cys82–Cys89, Cys83–Cys95, Cys97–Cys106, Cys115–Cys133, Cys128–Cys149, and Cys131–Cys140. A lipid anchor (GPI-anchor amidated aspartate) is attached at Asp150. A propeptide spans 151–188 (GLVMDEHLVASRTPELPPSARTTTFMLVGICLSIQSYY) (removed in mature form).

The protein belongs to the EGF-CFC (Cripto-1/FRL1/Cryptic) family. In terms of assembly, interacts with the activin type-1 receptor ACVR1B. In terms of processing, the GPI-anchor is attached to the protein in the endoplasmic reticulum and serves to target the protein to the cell surface. There, it is processed by GPI processing phospholipase A2 (TMEM8A), removing an acyl-chain at the sn-2 position of GPI and releasing CRIPTO as a lysophosphatidylinositol-bearing form, which is further cleaved by phospholipase D (GPLD1) into a soluble form. As to expression, preferentially expressed in gastric and colorectal carcinomas than in their normal counterparts. Expressed in breast and lung.

The protein resides in the cell membrane. It is found in the secreted. Functionally, GPI-anchored cell membrane protein involved in Nodal signaling. Cell-associated CRIPTO acts as a Nodal coreceptor in cis. Shedding of CRIPTO by TMEM8A modulates Nodal signaling by allowing soluble CRIPTO to act as a Nodal coreceptor on other cells. Could play a role in the determination of the epiblastic cells that subsequently give rise to the mesoderm. This Homo sapiens (Human) protein is Protein Cripto.